A 1224-amino-acid polypeptide reads, in one-letter code: Cytosolic carboxypeptidase 1 (1224 aa).

A disordered region spans residues 361–398 (PPDVDDVVDESDDNDDAETESEIETEDDKDQNFKNDDI). Residues 363-389 (DVDDVVDESDDNDDAETESEIETEDDK) are compositionally biased toward acidic residues. Residues 846–1136 (YPYTYSTLKM…KFCVGLLRLK (291 aa)) enclose the Peptidase M14 domain. Residues His-918, Glu-921, and His-1015 each coordinate Zn(2+). Glu-1100 acts as the Proton donor/acceptor in catalysis. Acidic residues predominate over residues 1186–1197 (SAESNDDQDAEL). Positions 1186–1224 (SAESNDDQDAELADNVGDYEANNQEDGLSDSDSTRILLS) are disordered. Polar residues predominate over residues 1206–1224 (ANNQEDGLSDSDSTRILLS).

It belongs to the peptidase M14 family. It depends on Zn(2+) as a cofactor.

It localises to the cytoplasm. The protein localises to the cytosol. It is found in the nucleus. Its subcellular location is the mitochondrion. It catalyses the reaction (L-glutamyl)(n+1)-gamma-L-glutamyl-L-glutamyl-[protein] + H2O = (L-glutamyl)(n)-gamma-L-glutamyl-L-glutamyl-[protein] + L-glutamate. The catalysed reaction is C-terminal L-alpha-aminoacyl-L-glutamyl-L-glutamyl-[tubulin] + H2O = C-terminal L-alpha-aminoacyl-L-glutamyl-[tubulin] + L-glutamate. Its function is as follows. Metallocarboxypeptidase that mediates protein deglutamylation of tubulin and non-tubulin target proteins. Catalyzes the removal of polyglutamate side chains present on the gamma-carboxyl group of glutamate residues within the C-terminal tail of alpha- and beta-tubulin. Specifically cleaves tubulin long-side-chains, while it is not able to remove the branching point glutamate. Also catalyzes the removal of polyglutamate residues from the carboxy-terminus of alpha-tubulin as well as non-tubulin proteins. This Gallus gallus (Chicken) protein is Cytosolic carboxypeptidase 1 (AGTPBP1).